Consider the following 338-residue polypeptide: Tryptophan--tRNA ligase (338 aa).

ATP contacts are provided by residues 11 to 13 (QPS) and 19 to 20 (GN). The short motif at 12 to 20 (PSGELSIGN) is the 'HIGH' region element. Aspartate 135 contributes to the L-tryptophan binding site. ATP is bound by residues 147-149 (GSD), valine 189, and 198-202 (KMSKS). The 'KMSKS' region motif lies at 198-202 (KMSKS).

Belongs to the class-I aminoacyl-tRNA synthetase family. Homodimer.

The protein localises to the cytoplasm. The enzyme catalyses tRNA(Trp) + L-tryptophan + ATP = L-tryptophyl-tRNA(Trp) + AMP + diphosphate + H(+). Its function is as follows. Catalyzes the attachment of tryptophan to tRNA(Trp). This is Tryptophan--tRNA ligase from Aliivibrio fischeri (strain ATCC 700601 / ES114) (Vibrio fischeri).